The primary structure comprises 316 residues: Uracil-DNA glycosylase (316 aa).

The span at 36–79 (AAAAAPAGAGAGASKPARPSAAARPAKGTPAASAATTATGADAS) shows a compositional bias: low complexity. A disordered region spans residues 36-91 (AAAAAPAGAGAGASKPARPSAAARPAKGTPAASAATTATGADASAPPPDPGAPTWD). D159 (proton acceptor) is an active-site residue.

This sequence belongs to the uracil-DNA glycosylase (UDG) superfamily. UNG family.

It is found in the host nucleus. The enzyme catalyses Hydrolyzes single-stranded DNA or mismatched double-stranded DNA and polynucleotides, releasing free uracil.. In terms of biological role, excises uracil residues from the DNA which can arise as a result of misincorporation of dUMP residues by DNA polymerase or deamination of cytosines. Therefore may reduce deleterious uracil incorporation into the viral genome, particularly in terminally differentiated cells which lack DNA repair enzymes. The sequence is that of Uracil-DNA glycosylase (UL2) from Sus scrofa (Pig).